The chain runs to 475 residues: Probable proline--tRNA ligase, mitochondrial (475 aa).

Residues Met1–Phe29 constitute a mitochondrion transit peptide.

The protein belongs to the class-II aminoacyl-tRNA synthetase family.

It localises to the mitochondrion matrix. It carries out the reaction tRNA(Pro) + L-proline + ATP = L-prolyl-tRNA(Pro) + AMP + diphosphate. Its function is as follows. Mitochondrial aminoacyl-tRNA synthetase that catalyzes the specific attachment of the proline amino acid (aa) to the homologous transfer RNA (tRNA), further participating in protein synthesis. The reaction occurs in a two steps: proline is first activated by ATP to form Pro-AMP and then transferred to the acceptor end of tRNA(Pro). The sequence is that of Probable proline--tRNA ligase, mitochondrial from Homo sapiens (Human).